Here is a 746-residue protein sequence, read N- to C-terminus: NAD(P)H-quinone oxidoreductase subunit 5, chloroplastic (746 aa).

16 helical membrane passes run 9-29, 40-60, 89-109, 125-145, 147-167, 185-205, 221-241, 258-278, 280-300, 327-347, 354-374, 396-416, 425-445, 547-567, 608-628, and 723-743; these read WIIP…LLLF, WTFL…YLSI, IDPL…LVLI, FAYM…SNLI, VYFF…FWFT, GDFG…SFEF, VNFL…IAKS, TPIS…FLVA, LLPL…IGII, LGYM…FHLI, ALLF…VGYS, TAFL…CFWS, LLFS…TAFY, ILFP…IGIP, FSVS…KPFY, and YLFL…FFYF.

The protein belongs to the complex I subunit 5 family. In terms of assembly, NDH is composed of at least 16 different subunits, 5 of which are encoded in the nucleus.

Its subcellular location is the plastid. It is found in the chloroplast thylakoid membrane. It catalyses the reaction a plastoquinone + NADH + (n+1) H(+)(in) = a plastoquinol + NAD(+) + n H(+)(out). The enzyme catalyses a plastoquinone + NADPH + (n+1) H(+)(in) = a plastoquinol + NADP(+) + n H(+)(out). NDH shuttles electrons from NAD(P)H:plastoquinone, via FMN and iron-sulfur (Fe-S) centers, to quinones in the photosynthetic chain and possibly in a chloroplast respiratory chain. The immediate electron acceptor for the enzyme in this species is believed to be plastoquinone. Couples the redox reaction to proton translocation, and thus conserves the redox energy in a proton gradient. In Barbarea verna (Land cress), this protein is NAD(P)H-quinone oxidoreductase subunit 5, chloroplastic (ndhF).